Consider the following 281-residue polypeptide: Small ribosomal subunit protein uS3 (281 aa).

The KH type-2 domain occupies 38-106 (IRRLLSTGLE…QVQLNILEVK (69 aa)). The tract at residues 218–281 (APAGAERARR…VTHEPQIAES (64 aa)) is disordered. Over residues 238–252 (SGAAGTTVTGTDAGR) the composition is skewed to low complexity.

This sequence belongs to the universal ribosomal protein uS3 family. In terms of assembly, part of the 30S ribosomal subunit. Forms a tight complex with proteins S10 and S14.

In terms of biological role, binds the lower part of the 30S subunit head. Binds mRNA in the 70S ribosome, positioning it for translation. This is Small ribosomal subunit protein uS3 from Mycobacterium leprae (strain TN).